The following is a 55-amino-acid chain: Hirustasin (55 aa).

5 disulfides stabilise this stretch: Cys6–Cys17, Cys11–Cys22, Cys24–Cys44, Cys29–Cys48, and Cys33–Cys50. The 27-residue stretch at 24–50 folds into the Antistasin-like domain; that stretch reads CNEVHCRIRCKYGLKKDENGCEYPCSC.

The protein belongs to the protease inhibitor I15 (antistasin) family.

The protein resides in the secreted. Its function is as follows. Acts as an inhibitor of tissue kallikrein, trypsin, chymotrypsin and neutrophil cathepsin G. In Hirudo medicinalis (Medicinal leech), this protein is Hirustasin.